The primary structure comprises 428 residues: Enolase (428 aa).

Q163 contacts (2R)-2-phosphoglycerate. E205 acts as the Proton donor in catalysis. Mg(2+) is bound by residues D242, E285, and D312. Residues K337, R366, S367, and K388 each contribute to the (2R)-2-phosphoglycerate site. K337 serves as the catalytic Proton acceptor.

Belongs to the enolase family. Mg(2+) is required as a cofactor.

It is found in the cytoplasm. The protein resides in the secreted. Its subcellular location is the cell surface. It carries out the reaction (2R)-2-phosphoglycerate = phosphoenolpyruvate + H2O. It participates in carbohydrate degradation; glycolysis; pyruvate from D-glyceraldehyde 3-phosphate: step 4/5. In terms of biological role, catalyzes the reversible conversion of 2-phosphoglycerate (2-PG) into phosphoenolpyruvate (PEP). It is essential for the degradation of carbohydrates via glycolysis. This chain is Enolase, found in Nitrosomonas eutropha (strain DSM 101675 / C91 / Nm57).